The sequence spans 298 residues: MQLEKMITEGSNTASAEIDRVSTLEMCRIINDEDKTVPLAVERVLPDIAAAIDVIHAQVSGGGRLIYLGAGTSGRLGILDASECPPTYGVKPGLVVGLIAGGEYAIQHAVEGAEDSREGGVNDLKNINLTAQDVVVGIAASGRTPYVIAGLEYARQLGCRTVGISCNPGSAVSTTAEFAITPIVGAEVVTGSSRMKAGTAQKLVLNMLSTGLMIKSGKVFGNLMVDVVATNEKLHVRQVNIVKNATGCNAEQAEAALIACERNCKTAIVMVLKNLDAAEAKKRLDQHGGFIRQVLDKE.

Residues 55 to 218 form the SIS domain; that stretch reads IHAQVSGGGR…STGLMIKSGK (164 aa). Residue Glu83 is the Proton donor of the active site. The active site involves Glu114.

Belongs to the GCKR-like family. MurNAc-6-P etherase subfamily. As to quaternary structure, homodimer.

It catalyses the reaction N-acetyl-D-muramate 6-phosphate + H2O = N-acetyl-D-glucosamine 6-phosphate + (R)-lactate. The protein operates within amino-sugar metabolism; 1,6-anhydro-N-acetylmuramate degradation. It participates in amino-sugar metabolism; N-acetylmuramate degradation. Its pathway is cell wall biogenesis; peptidoglycan recycling. Functionally, specifically catalyzes the cleavage of the D-lactyl ether substituent of MurNAc 6-phosphate, producing GlcNAc 6-phosphate and D-lactate. Together with AnmK, is also required for the utilization of anhydro-N-acetylmuramic acid (anhMurNAc) either imported from the medium or derived from its own cell wall murein, and thus plays a role in cell wall recycling. This is N-acetylmuramic acid 6-phosphate etherase from Escherichia coli O8 (strain IAI1).